The chain runs to 331 residues: Biotin synthase (331 aa).

Residues 52–277 (PDVEVEGIIS…RTMLRFAGGR (226 aa)) enclose the Radical SAM core domain. Residues Cys67, Cys71, and Cys74 each coordinate [4Fe-4S] cluster. Residues Cys110, Cys143, Cys202, and Arg272 each coordinate [2Fe-2S] cluster.

The protein belongs to the radical SAM superfamily. Biotin synthase family. As to quaternary structure, homodimer. Requires [4Fe-4S] cluster as cofactor. It depends on [2Fe-2S] cluster as a cofactor.

The enzyme catalyses (4R,5S)-dethiobiotin + (sulfur carrier)-SH + 2 reduced [2Fe-2S]-[ferredoxin] + 2 S-adenosyl-L-methionine = (sulfur carrier)-H + biotin + 2 5'-deoxyadenosine + 2 L-methionine + 2 oxidized [2Fe-2S]-[ferredoxin]. It participates in cofactor biosynthesis; biotin biosynthesis; biotin from 7,8-diaminononanoate: step 2/2. In terms of biological role, catalyzes the conversion of dethiobiotin (DTB) to biotin by the insertion of a sulfur atom into dethiobiotin via a radical-based mechanism. In Mycolicibacterium gilvum (strain PYR-GCK) (Mycobacterium gilvum (strain PYR-GCK)), this protein is Biotin synthase.